The primary structure comprises 347 residues: E3 ubiquitin-protein ligase ARK2C (347 aa).

Disordered regions lie at residues 23 to 79 (PFQR…GTLH) and 268 to 289 (PHKY…GEES). Residues 267–269 (FPH) form a ubiquitin binding region. The span at 276–285 (PQDSKGKKDE) shows a compositional bias: basic and acidic residues. Positions 295 and 298 each coordinate Zn(2+). The RING-type; atypical zinc-finger motif lies at 295–336 (CTICLSMLEDGEDVRRLPCMHLFHQLCVDQWLAMSKKCPICR). Residues 310 to 314 (RLPCM) form a ubiquitin binding region. His-318 and Cys-321 together coordinate Zn(2+).

It belongs to the Arkadia family. As to quaternary structure, monomer; binding to the ubiquitin-conjugating enzyme E2 does not trigger homodimerization. In terms of tissue distribution, expressed in neurons of the nervous system.

The protein resides in the nucleus. It catalyses the reaction S-ubiquitinyl-[E2 ubiquitin-conjugating enzyme]-L-cysteine + [acceptor protein]-L-lysine = [E2 ubiquitin-conjugating enzyme]-L-cysteine + N(6)-ubiquitinyl-[acceptor protein]-L-lysine.. Its activity is regulated as follows. Binds free ubiquitin non-covalently via its RING-type zinc finger. Ubiquitin-binding leads to enhance the E3 ubiquitin-protein ligase activity by stabilizing the ubiquitin-conjugating enzyme E2 (donor ubiquitin) in the 'closed' conformation and activating ubiquitin transfer. E3 ubiquitin-protein ligase that acts as a regulator of motor axon elongation. Required for efficient motor axon extension in the dorsal forelimb by enhancing the transcriptional responses of the SMAD1/SMAD5/SMAD8 effectors, which are activated downstream of BMP. Acts by mediating ubiquitination and degradation of SMAD inhibitors such as SMAD6, SMAD7, SKI and SNON isoform of SKIL. This is E3 ubiquitin-protein ligase ARK2C from Mus musculus (Mouse).